Reading from the N-terminus, the 152-residue chain is Transcriptional regulator MraZ (152 aa).

SpoVT-AbrB domains lie at 5 to 52 and 81 to 124; these read AHAI…PLCE and ASEC…SETR.

The protein belongs to the MraZ family. In terms of assembly, forms oligomers.

The protein resides in the cytoplasm. It is found in the nucleoid. The sequence is that of Transcriptional regulator MraZ from Tolumonas auensis (strain DSM 9187 / NBRC 110442 / TA 4).